The chain runs to 208 residues: MFTNQDFEIFNDQTLAGRMHLIKTVIDPKFEQVAPTIITSLQTPGEPPFYAHVAKHLRRFKNPPVDTWVAFSQNKRSYKAWPHFELGLWPDRLFIYFDILDECKPAVQAKMQLADLTPLLKALPAGYVISNNHGVPATQLATPANITQAIKKFNQYKHSELVVGRAVLVGDPLFENADTLNKLIIATFKQLLSIYQPVMAAVSAERQA.

The protein belongs to the UPF0637 family.

The sequence is that of UPF0637 protein lp_2332 from Lactiplantibacillus plantarum (strain ATCC BAA-793 / NCIMB 8826 / WCFS1) (Lactobacillus plantarum).